A 129-amino-acid chain; its full sequence is Prefoldin subunit 4 (129 aa).

N-acetylmethionine is present on Met-1.

It belongs to the prefoldin subunit beta family. In terms of assembly, heterohexamer of two PFD-alpha type and four PFD-beta type subunits.

Functionally, binds specifically to cytosolic chaperonin (c-CPN) and transfers target proteins to it. Binds to nascent polypeptide chain and promotes folding in an environment in which there are many competing pathways for nonnative proteins. This chain is Prefoldin subunit 4 (GIM3), found in Saccharomyces cerevisiae (strain ATCC 204508 / S288c) (Baker's yeast).